We begin with the raw amino-acid sequence, 94 residues long: MKIRPLGDRVVIKKIEAEETTKSGIVLPGSAKEKPQEAEIVAVGPGGVIDGKEIKMEVKVGDRVLFSKYAGNEVKIDGVEYTILRQDDILAIIE.

The protein belongs to the GroES chaperonin family. As to quaternary structure, heptamer of 7 subunits arranged in a ring. Interacts with the chaperonin GroEL.

It localises to the cytoplasm. Functionally, together with the chaperonin GroEL, plays an essential role in assisting protein folding. The GroEL-GroES system forms a nano-cage that allows encapsulation of the non-native substrate proteins and provides a physical environment optimized to promote and accelerate protein folding. GroES binds to the apical surface of the GroEL ring, thereby capping the opening of the GroEL channel. The chain is Co-chaperonin GroES from Clostridium kluyveri (strain NBRC 12016).